The primary structure comprises 312 residues: Methionyl-tRNA formyltransferase (312 aa).

110–113 (SLLP) is a (6S)-5,6,7,8-tetrahydrofolate binding site.

Belongs to the Fmt family.

The enzyme catalyses L-methionyl-tRNA(fMet) + (6R)-10-formyltetrahydrofolate = N-formyl-L-methionyl-tRNA(fMet) + (6S)-5,6,7,8-tetrahydrofolate + H(+). In terms of biological role, attaches a formyl group to the free amino group of methionyl-tRNA(fMet). The formyl group appears to play a dual role in the initiator identity of N-formylmethionyl-tRNA by promoting its recognition by IF2 and preventing the misappropriation of this tRNA by the elongation apparatus. This chain is Methionyl-tRNA formyltransferase, found in Mycobacterium marinum (strain ATCC BAA-535 / M).